We begin with the raw amino-acid sequence, 221 residues long: Sperm acrosome membrane-associated protein 3 (221 aa).

At 1 to 69 (MGICMSMYTQ…EARSRAPRRQ (69 aa)) the chain is on the cytoplasmic side. Residues 70–90 (LCPPGITWLALAYLLSCLLAS) traverse the membrane as a helical; Signal-anchor for type II membrane protein segment. The Extracellular segment spans residues 91-221 (SKAKVFSRCE…LSDWVDGCDF (131 aa)). The C-type lysozyme domain maps to 94–221 (KVFSRCELAK…LSDWVDGCDF (128 aa)). Disulfide bonds link C99–C219, C123–C207, C157–C172, and C168–C186.

It belongs to the glycosyl hydrolase 22 family. In terms of assembly, interacts with ASTL. As to expression, the processed form is expressed in sperm (at protein level). Expressed strongly in testis and epididymis and weakly in pancreas.

It is found in the cytoplasmic vesicle. It localises to the secretory vesicle. The protein resides in the acrosome membrane. Its subcellular location is the secreted. Sperm surface membrane protein that may be involved in sperm-egg plasma membrane adhesion and fusion during fertilization. It could be a potential receptor for the egg oligosaccharide residue N-acetylglucosamine, which is present in the extracellular matrix over the egg plasma membrane. The processed form has no detectable bacteriolytic activity in vitro. The chain is Sperm acrosome membrane-associated protein 3 (Spaca3) from Mus musculus (Mouse).